Reading from the N-terminus, the 349-residue chain is PDZ and LIM domain protein 2 (349 aa).

In terms of domain architecture, PDZ spans 1 to 84 (MALTVDVAGP…PLRLQLDRSQ (84 aa)). The segment at 74–147 (SPLRLQLDRS…TPPPTSPVAL (74 aa)) is disordered. Over residues 81 to 94 (DRSQTASPGQTNGE) the composition is skewed to polar residues. A phosphoserine mark is found at Ser124, Ser127, Ser129, Ser134, and Ser137. Phosphothreonine occurs at positions 138 and 142. A phosphoserine mark is found at Ser143 and Ser163. Residues 169 to 212 (AHHLTYPGHPTSQQAGHSSPSDSAVRVLLHSPGRPSSPRFSSLD) form a disordered region. The span at 178 to 190 (PTSQQAGHSSPSD) shows a compositional bias: polar residues. 6 positions are modified to phosphoserine: Ser199, Ser204, Ser205, Ser209, Ser210, and Ser263. A compositionally biased stretch (low complexity) spans 199 to 210 (SPGRPSSPRFSS). The 61-residue stretch at 281–341 (HTCEKCSVNI…EKHARQRYSM (61 aa)) folds into the LIM zinc-binding domain.

As to quaternary structure, interacts with alpha-actinins ACTN1 and ACTN4, FLNA and MYH9. Interacts (via LIM zinc-binding domain) with MKRN2. As to expression, highly expressed in lung. Expressed at intermediate level in kidney, testis and spleen. Weakly expressed in heart and brain.

The protein resides in the cytoplasm. The protein localises to the cytoskeleton. Probable adapter protein located at the actin cytoskeleton that promotes cell attachment. Necessary for the migratory capacity of epithelial cells. Overexpression enhances cell adhesion to collagen and fibronectin and suppresses anchorage independent growth. May contribute to tumor cell migratory capacity. This is PDZ and LIM domain protein 2 (Pdlim2) from Mus musculus (Mouse).